A 454-amino-acid polypeptide reads, in one-letter code: MIYRKIIWGILYVTLMLFDTHRAQECEEMTDLNFKDSLAGTSLKVRLLLYTRADPSCGQLLSHQEPFSNSQFNVSSVTTFLIHGYRPTGSPPVWMKQFVEFLLNRRDMNVIVVDWNRGATNMNYWQVVKNTRKVANNLTDLIQKMKDNGANLSSIHMIGVSLGAHISGFTGANFNGEIGRITALDPAGPEFNGRPPEDRLDPSDALFVEALHTDMDALGYRNLLGHIDYYANGGADQPGCPKTILSGSEYFKCDHQRSVFLYMSSVNGSCPIIAYPCESYTDFQDGTCMDCGKFKSAGCPIFGYDSVRWRDTLVQLEQTRTYFQTNKASPFCKVGYKVDIVSWNQKTHWGYLTIKLSNGTEETQVELNHKSLKFERFQETSVLAQFERDIQPVKKITLKFCPRKGLRPRKKLRLLHIRLTPLQNHLRPLCRYDLLLEESKDVTFKPIPCEDSNF.

A signal peptide spans 1–23; it reads MIYRKIIWGILYVTLMLFDTHRA. N73, N137, and N151 each carry an N-linked (GlcNAc...) asparagine glycan. S161 (nucleophile) is an active-site residue. D185 acts as the Charge relay system in catalysis. A disulfide bridge connects residues C240 and C253. H255 acts as the Charge relay system in catalysis. An N-linked (GlcNAc...) asparagine glycan is attached at N267. Cystine bridges form between C277/C288 and C291/C299. N358 carries N-linked (GlcNAc...) asparagine glycosylation. C430 and C449 form a disulfide bridge.

It belongs to the AB hydrolase superfamily. Lipase family.

It is found in the secreted. The protein localises to the cell membrane. The enzyme catalyses 1-hexadecanoyl-2-(9Z-octadecenoyl)-sn-glycero-3-phosphate + H2O = 2-(9Z-octadecenoyl)-sn-glycero-3-phosphate + hexadecanoate + H(+). In terms of biological role, hydrolyzes specifically phosphatidic acid (PA) to produce 2-acyl lysophosphatidic acid (LPA; a potent bioactive lipid mediator) and fatty acid. Does not hydrolyze other phospholipids, like phosphatidylserine (PS), phosphatidylcholine (PC) and phosphatidylethanolamine (PE) or triacylglycerol (TG). This chain is Lipase member H (liph), found in Danio rerio (Zebrafish).